The sequence spans 155 residues: Protein-export protein SecB (155 aa).

The protein belongs to the SecB family. In terms of assembly, homotetramer, a dimer of dimers. One homotetramer interacts with 1 SecA dimer.

Its subcellular location is the cytoplasm. Its function is as follows. One of the proteins required for the normal export of preproteins out of the cell cytoplasm. It is a molecular chaperone that binds to a subset of precursor proteins, maintaining them in a translocation-competent state. It also specifically binds to its receptor SecA. The sequence is that of Protein-export protein SecB from Escherichia coli O127:H6 (strain E2348/69 / EPEC).